A 462-amino-acid chain; its full sequence is Violaxanthin de-epoxidase, chloroplastic (462 aa).

The cysteines at positions 231 and 362 are disulfide-linked. Residues 372–437 (IEKTVEEGER…RELSKEEMEF (66 aa)) adopt a coiled-coil conformation. Residues 380-391 (ERIIVKEVEEIE) are involved in the binding to the thylakoid membrane.

The protein belongs to the calycin superfamily. Lipocalin family. As to quaternary structure, interacts in vitro with LTO1.

The protein localises to the plastid. It is found in the chloroplast thylakoid membrane. The enzyme catalyses all-trans-violaxanthin + 2 L-ascorbate = all-trans-zeaxanthin + 2 L-dehydroascorbate + 2 H2O. With respect to regulation, activity limited by low ascorbate availability. Feedback inhibition by zeaxanthin. Requires the presence of micelle-forming lipids such as monogalactosyldiacylglyceride (MGDG). Low concentration of bilayer forming lipids, such as digalactosyldiacylglyceride (DGDG) or phosphatidylcholine, supports a slower but nearly complete activity. 80% of the specific activity in lumenal chloroplast fractions is lost in vitro in the presence of reduced thioredoxin. Its function is as follows. Part of the xanthophyll (or violaxanthin) cycle for controlling the concentration of zeaxanthin in chloroplasts. Catalyzes the two-step mono de-epoxidation reaction. Stereospecific for all-trans xanthophylls. Zeaxanthin induces the dissipation of excitation energy in the chlorophyll of the light-harvesting protein complex of photosystem II. This is Violaxanthin de-epoxidase, chloroplastic from Arabidopsis thaliana (Mouse-ear cress).